We begin with the raw amino-acid sequence, 39 residues long: Potassium channel toxin alpha-KTx 2.8 (39 aa).

3 disulfide bridges follow: C7/C29, C13/C34, and C17/C36.

The protein belongs to the short scorpion toxin superfamily. Potassium channel inhibitor family. Alpha-KTx 02 subfamily. Expressed by the venom gland.

The protein resides in the secreted. Functionally, blocks Kv1.3/KCNA3 voltage-gated potassium channels of human T-lymphocytes (Kd=0.71 nM). This is Potassium channel toxin alpha-KTx 2.8 from Centruroides elegans (Bark scorpion).